The following is a 475-amino-acid chain: Polyphosphate:AMP phosphotransferase (475 aa).

PPK2 stretches follow at residues 18 to 222 and 256 to 472; these read LDLI…LTAL and ANYK…KADR.

Belongs to the polyphosphate kinase 2 (PPK2) family. Class II subfamily. Homodimer and homotetramer. Mg(2+) is required as a cofactor.

It catalyses the reaction [phosphate](n) + ADP = [phosphate](n+1) + AMP. Uses inorganic polyphosphate (polyP) as a donor to convert AMP to ADP. Can also use GMP, UMP, CMP, TMP or deoxyribonucleoside monophosphates, with lower efficiency. Cannot use low-molecular weight polyP as donors. Can also catalyze the synthesis of polyP from ADP or GDP, with lower efficiency. The sequence is that of Polyphosphate:AMP phosphotransferase from Acinetobacter johnsonii.